The chain runs to 525 residues: GMP synthase [glutamine-hydrolyzing] (525 aa).

Residues 9 to 207 form the Glutamine amidotransferase type-1 domain; that stretch reads RILILDFGSQ…VRDICECEAL (199 aa). The active-site Nucleophile is Cys-86. Active-site residues include His-181 and Glu-183. In terms of domain architecture, GMPS ATP-PPase spans 208 to 400; that stretch reads WTPAKIIDDA…LGLPYDMLYR (193 aa). Position 235 to 241 (235 to 241) interacts with ATP; it reads SGGVDSS.

In terms of assembly, homodimer.

The enzyme catalyses XMP + L-glutamine + ATP + H2O = GMP + L-glutamate + AMP + diphosphate + 2 H(+). It functions in the pathway purine metabolism; GMP biosynthesis; GMP from XMP (L-Gln route): step 1/1. In terms of biological role, catalyzes the synthesis of GMP from XMP. This chain is GMP synthase [glutamine-hydrolyzing], found in Cronobacter sakazakii (strain ATCC BAA-894) (Enterobacter sakazakii).